The sequence spans 172 residues: Transcriptional activator protein (172 aa).

Positions 56 to 71 match the Nuclear localization signal motif; that stretch reads KAQHRIAKHKAIRRRR. A zinc finger lies at 76-93; it reads CGCSIFYHIKCADHGFTH. A disordered region spans residues 119 to 172; the sequence is DHAGGRSSIHTDKDIPHPSQVQSQPQESTGSPQSIPELPSLDDIDSSFWDDIFK. A compositionally biased stretch (polar residues) spans 137 to 152; the sequence is SQVQSQPQESTGSPQS. The segment at 158–172 is transactivation; the sequence is SLDDIDSSFWDDIFK.

This sequence belongs to the geminiviridae transcriptional activator protein family. Monomer. Homodimer. Homooligomer. Self-interaction correlates with nuclear localization and efficient activation of transcription. Monomers suppress local silencing by interacting with and inactivating host adenosine kinase 2 (ADK2) in the cytoplasm. Interacts with and inhibits host SNF1 kinase. Binds to ssDNA. Post-translationally, phosphorylated.

The protein localises to the host nucleus. It is found in the host cytoplasm. Functionally, strong activator of the late viral genes promoters. Enhances the expression of the capsid protein and nuclear shuttle protein. Acts as a suppressor of RNA-mediated gene silencing, also known as post-transcriptional gene silencing (PTGS), a mechanism of plant viral defense that limits the accumulation of viral RNAs. Suppresses the host RNA silencing by inhibiting adenosine kinase 2 (ADK2), a kinase involved in a general methylation pathway. Also suppresses the host basal defense by interacting with and inhibiting SNF1 kinase, a key regulator of cell metabolism implicated in innate antiviral defense. Determines pathogenicity. This is Transcriptional activator protein from Bean golden yellow mosaic virus (isolate Puerto Rico-Japan) (BGYMV).